The primary structure comprises 555 residues: Cyclin-T1.2 (555 aa).

Disordered stretches follow at residues 315–429 and 505–555; these read SYKG…NSSK and PADS…GELV. The span at 321–335 shows a compositional bias: low complexity; the sequence is KPLSNSSDSPSTRPS. A compositionally biased stretch (basic and acidic residues) spans 341–359; the sequence is KNQKVVEQELMEQRMKEAA. Residues 382–398 are compositionally biased toward low complexity; it reads TSSSASNNSNHQNRSSS. Pro residues predominate over residues 521–543; it reads PDEPSPPVSQILLPPPPPPPILP.

It belongs to the cyclin family. Cyclin C subfamily.

In terms of biological role, regulatory subunit of the cyclin-dependent kinase pair (CDK9/cyclin T) complex, also called positive transcription elongation factor B (P-TEFb), which is proposed to facilitate the transition from abortive to production elongation by phosphorylating the CTD (carboxy-terminal domain) of the large subunit of RNA polymerase II (RNAP II). The protein is Cyclin-T1.2 (cit-1.2) of Caenorhabditis elegans.